The sequence spans 313 residues: Protein-glutamine deamidase Cif (313 aa).

Residues C128, H186, and Q205 contribute to the active site.

Belongs to the Cif family.

It localises to the secreted. The protein localises to the host nucleus. It catalyses the reaction L-glutaminyl-[protein] + H2O = L-glutamyl-[protein] + NH4(+). Its function is as follows. Protein-glutamine deamidase effector that inhibits the host cell cycle and other key cellular processes such as the actin network and programmed-cell death. Acts by mediating the side chain deamidation of 'Gln-40' of host NEDD8, converting it to glutamate, thereby abolishing the activity of cullin-RING-based E3 ubiquitin-protein ligase complexes (CRL complexes). Inactivation of CRL complexes prevents ubiquitination and subsequent degradation of the cyclin-dependent kinase inhibitors CDKN1A/p21 and CDKN1B/p27, leading to G1 and G2 cell cycle arrests in host cells. Deamidation of 'Gln-40' of host NEDD8 also triggers macrophage-specific programmed cell death. Also able to catalyze deamidation of 'Gln-40' of host ubiquitin in vitro; however, NEDD8 constitutes the preferred substrate in vivo. This chain is Protein-glutamine deamidase Cif, found in Photorhabdus laumondii subsp. laumondii (strain DSM 15139 / CIP 105565 / TT01) (Photorhabdus luminescens subsp. laumondii).